The primary structure comprises 546 residues: ATP-dependent RNA helicase DBP2 (546 aa).

The tract at residues 1-56 is disordered; it reads MTYGGRDQQYNKTNYKSRGGDFRGGRNSDRNSYNDRPQGGNYRGGFGGRSNYNQPQ. Arg-18 and Arg-43 each carry omega-N-methylarginine. The span at 18–33 shows a compositional bias: basic and acidic residues; sequence RGGDFRGGRNSDRNSY. Ser-88 and Ser-90 each carry phosphoserine. The Q motif motif lies at 113–141; it reads TTFDEAGFPDYVLNEVKAEGFDKPTGIQC. Residues 144 to 319 enclose the Helicase ATP-binding domain; the sequence is WPMALSGRDM…ADYLNDPIQV (176 aa). Residue 157 to 164 participates in ATP binding; it reads AATGSGKT. The short motif at 267 to 270 is the DEAD box element; it reads DEAD. One can recognise a Helicase C-terminal domain in the interval 347–494; sequence RLNKYLETAS…NIPPELLKYD (148 aa). Lys-474 is covalently cross-linked (Glycyl lysine isopeptide (Lys-Gly) (interchain with G-Cter in ubiquitin)). The segment at 493-546 is disordered; the sequence is YDRRSYGGGHPRYGGGRGGRGGYGRRGGYGGGRGGYGGNRQRDGGWGNRGRSNY. Positions 498–540 are enriched in gly residues; sequence YGGGHPRYGGGRGGRGGYGRRGGYGGGRGGYGGNRQRDGGWGN. The RNA-binding RGG-box stretch occupies residues 505–530; the sequence is YGGGRGGRGGYGRRGGYGGGRGGYGG. Arg-509, Arg-512, Arg-518, and Arg-525 each carry dimethylated arginine; alternate. An omega-N-methylarginine; alternate mark is found at Arg-509, Arg-512, Arg-518, and Arg-525.

The protein belongs to the DEAD box helicase family. DDX5/DBP2 subfamily. Interacts with UPF1. Associates with polysomes.

The protein localises to the cytoplasm. It is found in the nucleus. The enzyme catalyses ATP + H2O = ADP + phosphate + H(+). Its function is as follows. ATP-dependent RNA helicase involved nonsense-mediated mRNA decay and ribosome biogenesis through rRNA processing. Associates directly with chromatin, correlating with transcriptional activity. Required for assembly of mRNA-binding proteins YRA1, NAB2, and MEX67 onto poly(A)+ RNA. The protein is ATP-dependent RNA helicase DBP2 of Saccharomyces cerevisiae (strain ATCC 204508 / S288c) (Baker's yeast).